The sequence spans 263 residues: Formamidopyrimidine-DNA glycosylase (263 aa).

Catalysis depends on Pro2, which acts as the Schiff-base intermediate with DNA. Catalysis depends on Glu3, which acts as the Proton donor. Lys59 (proton donor; for beta-elimination activity) is an active-site residue. His93 and Arg111 together coordinate DNA. The segment at 229–263 adopts an FPG-type zinc-finger fold; the sequence is KVYGKNGSLCVRCNNVLIRERHAGRSTHYCPHCQK. Arg253 (proton donor; for delta-elimination activity) is an active-site residue.

It belongs to the FPG family. As to quaternary structure, monomer. Requires Zn(2+) as cofactor.

The enzyme catalyses Hydrolysis of DNA containing ring-opened 7-methylguanine residues, releasing 2,6-diamino-4-hydroxy-5-(N-methyl)formamidopyrimidine.. It carries out the reaction 2'-deoxyribonucleotide-(2'-deoxyribose 5'-phosphate)-2'-deoxyribonucleotide-DNA = a 3'-end 2'-deoxyribonucleotide-(2,3-dehydro-2,3-deoxyribose 5'-phosphate)-DNA + a 5'-end 5'-phospho-2'-deoxyribonucleoside-DNA + H(+). Its function is as follows. Involved in base excision repair of DNA damaged by oxidation or by mutagenic agents. Acts as a DNA glycosylase that recognizes and removes damaged bases. Has a preference for oxidized purines, such as 7,8-dihydro-8-oxoguanine (8-oxoG). Has AP (apurinic/apyrimidinic) lyase activity and introduces nicks in the DNA strand. Cleaves the DNA backbone by beta-delta elimination to generate a single-strand break at the site of the removed base with both 3'- and 5'-phosphates. The protein is Formamidopyrimidine-DNA glycosylase of Carboxydothermus hydrogenoformans (strain ATCC BAA-161 / DSM 6008 / Z-2901).